Consider the following 543-residue polypeptide: Chaperonin GroEL 2 (543 aa).

Residues 29–32, 86–90, Gly413, 479–481, and Asp495 each bind ATP; these read TLGP, DGTTT, and NAA.

It belongs to the chaperonin (HSP60) family. Forms a cylinder of 14 subunits composed of two heptameric rings stacked back-to-back. Interacts with the co-chaperonin GroES.

It localises to the cytoplasm. The catalysed reaction is ATP + H2O + a folded polypeptide = ADP + phosphate + an unfolded polypeptide.. Functionally, together with its co-chaperonin GroES, plays an essential role in assisting protein folding. The GroEL-GroES system forms a nano-cage that allows encapsulation of the non-native substrate proteins and provides a physical environment optimized to promote and accelerate protein folding. This is Chaperonin GroEL 2 from Prochlorococcus marinus (strain NATL1A).